A 285-amino-acid chain; its full sequence is Diaminopimelate epimerase 2 (285 aa).

Residues asparagine 11, asparagine 63, 73 to 74, asparagine 158, asparagine 191, 209 to 210, and 219 to 220 each bind substrate; these read GN, ER, and GS.

Belongs to the diaminopimelate epimerase family. Homodimer.

The protein resides in the cytoplasm. The catalysed reaction is (2S,6S)-2,6-diaminopimelate = meso-2,6-diaminopimelate. Its pathway is amino-acid biosynthesis; L-lysine biosynthesis via DAP pathway; DL-2,6-diaminopimelate from LL-2,6-diaminopimelate: step 1/1. Catalyzes the stereoinversion of LL-2,6-diaminopimelate (L,L-DAP) to meso-diaminopimelate (meso-DAP), a precursor of L-lysine and an essential component of the bacterial peptidoglycan. This is Diaminopimelate epimerase 2 from Nostoc sp. (strain PCC 7120 / SAG 25.82 / UTEX 2576).